The primary structure comprises 142 residues: Large ribosomal subunit protein uL13 (142 aa).

The protein belongs to the universal ribosomal protein uL13 family. Part of the 50S ribosomal subunit.

In terms of biological role, this protein is one of the early assembly proteins of the 50S ribosomal subunit, although it is not seen to bind rRNA by itself. It is important during the early stages of 50S assembly. The sequence is that of Large ribosomal subunit protein uL13 from Vibrio cholerae serotype O1 (strain M66-2).